A 243-amino-acid chain; its full sequence is UPF0246 protein M6_Spy1787 (243 aa).

This sequence belongs to the UPF0246 family.

The polypeptide is UPF0246 protein M6_Spy1787 (Streptococcus pyogenes serotype M6 (strain ATCC BAA-946 / MGAS10394)).